A 683-amino-acid polypeptide reads, in one-letter code: Methionine--tRNA ligase (683 aa).

Positions proline 14–histidine 24 match the 'HIGH' region motif. The Zn(2+) site is built by cysteine 145, cysteine 148, cysteine 158, and cysteine 161. The short motif at lysine 331–serine 335 is the 'KMSKS' region element. Lysine 334 is a binding site for ATP. Positions alanine 545–proline 572 are disordered. In terms of domain architecture, tRNA-binding spans threonine 581–lysine 683.

This sequence belongs to the class-I aminoacyl-tRNA synthetase family. MetG type 1 subfamily. Homodimer. Zn(2+) serves as cofactor.

Its subcellular location is the cytoplasm. The catalysed reaction is tRNA(Met) + L-methionine + ATP = L-methionyl-tRNA(Met) + AMP + diphosphate. Functionally, is required not only for elongation of protein synthesis but also for the initiation of all mRNA translation through initiator tRNA(fMet) aminoacylation. The sequence is that of Methionine--tRNA ligase from Pseudomonas fluorescens (strain Pf0-1).